The following is a 652-amino-acid chain: MNKRMNELVALLNRYATEYYTSDNPSVSDSEYDRLYRELVELETAYPEQVLADSPTHRVGGKVLDGFEKYSHQYPLYSLQDAFSREELDAFDARVRKEVAHPTYICELKIDGLSISLTYEKGILVAGVTRGDGSIGENITENLKRVKDIPLTLPEELDITVRGECYMPRASFDQVNQVRQENGEPEFANPRNAAAGTLRQLDTAVVAKRNLATFLYQEASPSTRDSQEKGLKYLEQLGFVVNPKRILAENIDEIWNFIQEVGQERENLPYDIDGVVIKVNDLVSQEELGFTVKAPKWAVAYKFPAEEKEAQLLSVDWTVGRTGVVTPTANLTPVQLAGTTVSRATLHNVDYIAEKDIRKDDTVIVYKAGDIIPAVLRVVESKRVSEEKLDIPTNCPSCNSDLLHFEDEVALRCINPRCPAQIMEGLIHFASRDAMNITGLGPSIVEKLFAANLVKDVADIYRLQEEDFLLLEGVKEKSAAKLYQAIQASKENSAEKLLFGLGIRHVGSKASQLLLQYFHSIENLSQADSEEVASIESLGGVIAKSLQTYFAAEGSEILLRELKETGVNLDYKGQTVVADAALSGLTVVLTGKLERLKRSEAKSKLESLGAKVTGSVSKKTDLVVVGADAGSKLQKAQELGIQVRDEAWLESL.

NAD(+) contacts are provided by residues 29–33 (DSEYD), 78–79 (SL), and Glu107. The active-site N6-AMP-lysine intermediate is Lys109. Arg130, Glu164, Lys278, and Lys302 together coordinate NAD(+). 4 residues coordinate Zn(2+): Cys395, Cys398, Cys413, and Cys418. Residues 577 to 652 (VADAALSGLT…VRDEAWLESL (76 aa)) enclose the BRCT domain.

Belongs to the NAD-dependent DNA ligase family. LigA subfamily. Mg(2+) serves as cofactor. It depends on Mn(2+) as a cofactor.

The enzyme catalyses NAD(+) + (deoxyribonucleotide)n-3'-hydroxyl + 5'-phospho-(deoxyribonucleotide)m = (deoxyribonucleotide)n+m + AMP + beta-nicotinamide D-nucleotide.. In terms of biological role, DNA ligase that catalyzes the formation of phosphodiester linkages between 5'-phosphoryl and 3'-hydroxyl groups in double-stranded DNA using NAD as a coenzyme and as the energy source for the reaction. It is essential for DNA replication and repair of damaged DNA. The protein is DNA ligase of Streptococcus pneumoniae (strain Hungary19A-6).